Consider the following 205-residue polypeptide: Isochorismatase domain-containing protein 2 (205 aa).

The protein belongs to the isochorismatase family.

In Xenopus laevis (African clawed frog), this protein is Isochorismatase domain-containing protein 2 (isoc2).